Reading from the N-terminus, the 461-residue chain is tRNA modification GTPase MnmE (461 aa).

(6S)-5-formyl-5,6,7,8-tetrahydrofolate is bound by residues Arg23, Glu88, and Arg127. Positions 223-383 (GLNTVIVGKP…LKECIKNLFF (161 aa)) constitute a TrmE-type G domain. Residue Asn233 participates in K(+) binding. GTP is bound by residues 233–238 (NVGKSS), 252–258 (TEIPGTT), and 277–280 (DTAG). A Mg(2+)-binding site is contributed by Ser237. K(+) is bound by residues Thr252, Ile254, and Thr257. Mg(2+) is bound at residue Thr258. Residue Lys461 participates in (6S)-5-formyl-5,6,7,8-tetrahydrofolate binding.

It belongs to the TRAFAC class TrmE-Era-EngA-EngB-Septin-like GTPase superfamily. TrmE GTPase family. In terms of assembly, homodimer. Heterotetramer of two MnmE and two MnmG subunits. Requires K(+) as cofactor.

Its subcellular location is the cytoplasm. Functionally, exhibits a very high intrinsic GTPase hydrolysis rate. Involved in the addition of a carboxymethylaminomethyl (cmnm) group at the wobble position (U34) of certain tRNAs, forming tRNA-cmnm(5)s(2)U34. The sequence is that of tRNA modification GTPase MnmE from Clostridium botulinum (strain Okra / Type B1).